The primary structure comprises 1893 residues: Serine-aspartate repeat-containing protein I (1893 aa).

The N-terminal stretch at 1 to 54 (MNFKGVKLLKNSKKRLDFLPNTLNKYSIRKFTVGTASILVGATLFLGVSNEAEA) is a signal peptide. The interval 53–333 (EAAEKIDSPT…AHGINNKNKQ (281 aa)) is disordered. The segment covering 54–222 (AAEKIDSPTK…AEEPATKEEA (169 aa)) has biased composition (basic and acidic residues). 21 tandem repeats follow at residues 72–83 (AATKEEAATTEE), 84–95 (PATKEEAATTEE), 96–107 (PATKEEAAIAEE), 108–119 (PATKEEAATTEE), 120–131 (PATKEEAAIAEE), 132–143 (PATKEEAATTEE), 144–155 (PATKEEAATTEE), 156–167 (PATKEEAAIAEE), 168–179 (PATKEEAATTEE), 180–191 (PATKEEAAIAEE), 192–203 (PATKEEAVTSEE), 204–215 (AATKEKAAIAEE), 216–227 (PATKEEAAIAEE), 228–239 (PETKEEAATTEE), 240–251 (PATKEEAAIAEE), 252–263 (AATKEKAVTSEE), 264–275 (AATKEKAAIAEE), 276–287 (AATKEKAAIAEE), 288–299 (PETKEEAATTEE), 300–311 (PETKEEAAIAEE), and 312–323 (PATKEKAVTSEE). Residues 72-323 (AATKEEAATT…TKEKAVTSEE (252 aa)) are 21 X 12 AA tandem repeat of [AP]-[AE]-T-K-E-[EK]-A-[AV]-[IT]-[AST]-E-E. Positions 240–284 (PATKEEAAIAEEAATKEKAVTSEEAATKEKAAIAEEAATKEKAAI) are enriched in basic and acidic residues. Residues 286-302 (EEPETKEEAATTEEPET) are compositionally biased toward acidic residues. Residues 312-325 (PATKEKAVTSEEAH) show a composition bias toward basic and acidic residues. The tract at residues 324–755 (AHGINNKNKQ…GSSTAQGDNP (432 aa)) is ligand binding A region. CNA-B domains lie at 756–874 (TYNL…YETP) and 875–984 (KYSL…YFDE). The segment at 941–1867 (KPEGLTQTTT…GNNTQNNGTL (927 aa)) is disordered. A compositionally biased stretch (basic and acidic residues) spans 955 to 975 (DENKDADGEEVHVTITDHDDF). Over residues 981–1836 (YFDEDSDADA…DSDADADADS (856 aa)) the composition is skewed to acidic residues. The span at 1837 to 1851 (DADKYHNDTADKSND) shows a compositional bias: basic and acidic residues. The short motif at 1854–1858 (LPDTG) is the LPXTG sorting signal element. Thr-1857 carries the post-translational modification Pentaglycyl murein peptidoglycan amidated threonine. Residues 1858-1893 (GNNTQNNGTLFGSLFAALGGLFLVGSRRKNKNNEEK) constitute a propeptide, removed by sortase.

The protein belongs to the serine-aspartate repeat-containing protein (SDr) family.

Its subcellular location is the secreted. The protein resides in the cell wall. Responsible for collagen binding by S.saprophyticus. The protein is Serine-aspartate repeat-containing protein I (sdrI) of Staphylococcus saprophyticus.